The primary structure comprises 708 residues: MAAAAVAAAAAAAAAASLQVLEMESMETAAAGSAGLAAEVRGSGTVDFGPGPGISAMEASGGDPGPEAEDFECSSHCSELSWRQNEQRRQGLFCDITLCFGGAGGREFRAHRSVLAAATEYFTPLLSGQFSESRSGRVEMRKWSSEPGPEPDTVEAVIEYMYTGRIRVSTGSVHEVLELADRFLLIRLKEFCGEFLKKKLHLSNCVAIHSLAHMYTLSQLALKAADMIRRNFHKVIQDEEFYTLPFHLIRDWLSDLEITVDSEEVLFETVLKWVQRNAEERERYFEELFKLLRLSQMKPTYLTRHVKPERLVANNEVCVKLVADAVERHALRAENIQSGTCQHPTSHVSLLPRYGQNMDVIMVIGGVSEGGDYLSECVGYFVDEDRWVNLPHIHNHLDGHAVAVTESYVYVAGSMEPGFAKTVERYNPNLNTWEHVCSLMTRKHSFGLTEVKGKLYSIGGHGNFSPGFKDVTVYNPELDKWHNLESAPKILRDVKALAIEDRFVYIAARTPVDRDTEDGLKAVITCYDTETRQWQDVESLPLIDNYCFFQMSVVNSNFYQTASCCPKSYCLENEEAVRKIASQVSDEILESLPPEVLSIEGAAICYYKDDVFIIGGWKNSDDIDKQYRKEAYRYCAERKRWMLLPPMPQPRCRATACHVRIPYRYLHGTQRYPMPQNLMWQKDRIRQMQEIHRHALNMRRVPSSQIEC.

A signal peptide spans 1-15 (MAAAAVAAAAAAAAA). A disordered region spans residues 47–70 (DFGPGPGISAMEASGGDPGPEAED). The BTB domain occupies 94–170 (CDITLCFGGA…MYTGRIRVST (77 aa)). A BACK domain is found at 205 to 307 (CVAIHSLAHM…KPTYLTRHVK (103 aa)). Kelch repeat units lie at residues 360 to 407 (VIMV…VTES), 408 to 453 (YVYV…EVKG), 455 to 501 (LYSI…AIED), 503 to 556 (FVYI…VVNS), and 610 to 661 (DVFI…HVRI). At serine 465 the chain carries Phosphoserine.

As to quaternary structure, component of a cullin-RING-based BCR (BTB-CUL3-RBX1) E3 ubiquitin-protein ligase complex. Homodimer. Interacts with CUL3.

Functionally, component of a cullin-RING-based BCR (BTB-CUL3-RBX1) E3 ubiquitin-protein ligase complex that mediates the ubiquitination of target proteins, leading most often to their proteasomal degradation. This Homo sapiens (Human) protein is Kelch-like protein 11 (KLHL11).